Here is a 338-residue protein sequence, read N- to C-terminus: Lipoate-protein ligase A (338 aa).

Residues 29–216 (PATQRVLFLW…AFFAHYGERI (188 aa)) form the BPL/LPL catalytic domain. ATP is bound by residues Arg71, 76–79 (GAVF), and Lys134. Residue Lys134 coordinates (R)-lipoate.

Belongs to the LplA family. Monomer.

The protein localises to the cytoplasm. It carries out the reaction L-lysyl-[lipoyl-carrier protein] + (R)-lipoate + ATP = N(6)-[(R)-lipoyl]-L-lysyl-[lipoyl-carrier protein] + AMP + diphosphate + H(+). Its pathway is protein modification; protein lipoylation via exogenous pathway; protein N(6)-(lipoyl)lysine from lipoate: step 1/2. The protein operates within protein modification; protein lipoylation via exogenous pathway; protein N(6)-(lipoyl)lysine from lipoate: step 2/2. Catalyzes both the ATP-dependent activation of exogenously supplied lipoate to lipoyl-AMP and the transfer of the activated lipoyl onto the lipoyl domains of lipoate-dependent enzymes. This Salmonella paratyphi A (strain ATCC 9150 / SARB42) protein is Lipoate-protein ligase A.